The following is an 82-amino-acid chain: Modifier of protein aggregation 4 (82 aa).

Basic and acidic residues predominate over residues 1–23 (MTRGNQRDLAREKNQKKLADQKK). Disordered regions lie at residues 1-41 (MTRG…MDAR) and 63-82 (EAAAAAANAKKVAKVDPLKM).

Belongs to the SERF family.

It is found in the cytoplasm. The protein localises to the cytosol. The protein resides in the nucleus. Its function is as follows. Positive regulator of protein aggregation and age-related proteotoxicity. Induces conformational changes in aggregation-prone proteins, driving them into compact formations preceding the formation of aggregates. The sequence is that of Modifier of protein aggregation 4 from Caenorhabditis elegans.